We begin with the raw amino-acid sequence, 205 residues long: Meiotic nuclear division protein 1 homolog (205 aa).

Ser2 is subject to N-acetylserine. A coiled-coil region spans residues 83-173 (KRKLEALNSQ…EAANRWTDNI (91 aa)).

Belongs to the MND1 family. As to quaternary structure, heterodimer with PSMC3IP/HOP2. MND1-PSMC3IP interacts with DMC1 and RAD51 and binds to ssDNA and dsDNA showing no preference for either form of DNA.

It localises to the nucleus. Required for proper homologous chromosome pairing and efficient cross-over and intragenic recombination during meiosis. Stimulates both DMC1- and RAD51-mediated homologous strand assimilation, which is required for the resolution of meiotic double-strand breaks. The protein is Meiotic nuclear division protein 1 homolog of Mus musculus (Mouse).